The primary structure comprises 246 residues: Probable transcriptional regulatory protein HAPS_0943 (246 aa).

The protein belongs to the TACO1 family.

The protein localises to the cytoplasm. The sequence is that of Probable transcriptional regulatory protein HAPS_0943 from Glaesserella parasuis serovar 5 (strain SH0165) (Haemophilus parasuis).